We begin with the raw amino-acid sequence, 441 residues long: tRNA(Ile)-lysidine synthase (441 aa).

Residue 28–33 (SGGTDS) coordinates ATP.

The protein belongs to the tRNA(Ile)-lysidine synthase family.

It is found in the cytoplasm. It carries out the reaction cytidine(34) in tRNA(Ile2) + L-lysine + ATP = lysidine(34) in tRNA(Ile2) + AMP + diphosphate + H(+). Functionally, ligates lysine onto the cytidine present at position 34 of the AUA codon-specific tRNA(Ile) that contains the anticodon CAU, in an ATP-dependent manner. Cytidine is converted to lysidine, thus changing the amino acid specificity of the tRNA from methionine to isoleucine. The sequence is that of tRNA(Ile)-lysidine synthase from Orientia tsutsugamushi (strain Boryong) (Rickettsia tsutsugamushi).